The following is a 140-amino-acid chain: Nucleoside diphosphate kinase (140 aa).

The ATP site is built by Lys11, Phe59, Arg87, Thr93, Arg104, and Asn114. The active-site Pros-phosphohistidine intermediate is His117.

It belongs to the NDK family. As to quaternary structure, homotetramer. Mg(2+) serves as cofactor.

The protein localises to the cytoplasm. It carries out the reaction a 2'-deoxyribonucleoside 5'-diphosphate + ATP = a 2'-deoxyribonucleoside 5'-triphosphate + ADP. The catalysed reaction is a ribonucleoside 5'-diphosphate + ATP = a ribonucleoside 5'-triphosphate + ADP. Its function is as follows. Major role in the synthesis of nucleoside triphosphates other than ATP. The ATP gamma phosphate is transferred to the NDP beta phosphate via a ping-pong mechanism, using a phosphorylated active-site intermediate. In Rhizobium etli (strain CIAT 652), this protein is Nucleoside diphosphate kinase.